We begin with the raw amino-acid sequence, 332 residues long: Flotillin-like protein FloA (332 aa).

2 helical membrane-spanning segments follow: residues 6-26 (LGYL…FSFV) and 28-48 (VGLW…YMIG).

It belongs to the flotillin-like FloA family. Homooligomerizes.

Its subcellular location is the cell membrane. It localises to the membrane raft. Found in functional membrane microdomains (FMM) that may be equivalent to eukaryotic membrane rafts. FMMs are highly dynamic and increase in number as cells age. Flotillins are thought to be important factors in membrane fluidity. The protein is Flotillin-like protein FloA of Symbiobacterium thermophilum (strain DSM 24528 / JCM 14929 / IAM 14863 / T).